An 83-amino-acid chain; its full sequence is Delta-conotoxin-like Ac6.2 (83 aa).

A signal peptide spans 1-22; the sequence is MKLTCVVIVAVLFLTAWTFVTA. A propeptide spanning residues 23–51 is cleaved from the precursor; it reads DDSRYGLKNLFPKARHEMKNPEASKLNKR. Intrachain disulfides connect Cys-54-Cys-69, Cys-61-Cys-73, and Cys-68-Cys-78. 4-hydroxyproline occurs at positions 57 and 65.

The protein belongs to the conotoxin O1 superfamily. As to expression, expressed by the venom duct.

It localises to the secreted. Delta-conotoxins bind to site 6 of voltage-gated sodium channels (Nav) and inhibit the inactivation process. The sequence is that of Delta-conotoxin-like Ac6.2 from Conus achatinus (Little frog cone).